The primary structure comprises 919 residues: Calcium-activated chloride channel regulator 4 (919 aa).

The N-terminal stretch at 1–21 is a signal peptide; that stretch reads MGLFRGFVFLLVLCLLHQSNT. The metalloprotease domain stretch occupies residues 45-199; that stretch reads DEKIIEQIED…GISGRNRVYK (155 aa). The N-linked (GlcNAc...) asparagine glycan is linked to Asn-75. His-155 is a binding site for Zn(2+). The active site involves Glu-156. 2 residues coordinate Zn(2+): His-159 and Asp-166. Positions 306–476 constitute a VWFA domain; the sequence is IVCLVLDKSG…NGLIDAFGAL (171 aa). 9 N-linked (GlcNAc...) asparagine glycosylation sites follow: Asn-340, Asn-504, Asn-542, Asn-588, Asn-628, Asn-811, Asn-832, Asn-837, and Asn-852. Positions 870 to 893 are disordered; that stretch reads ANPDDIDPTPTPTPTPTPDKSHNS. The helical transmembrane segment at 895-915 threads the bilayer; sequence VNISTLVLSVIGSVVIVNFIL.

The protein belongs to the CLCR family. In terms of processing, the translation product is autoproteolytically cleaved by the metalloprotease domain in the endoplasmic reticulum into a N-terminal and a C-terminal products that remain physically associated with each other. The cleavage is necessary for calcium-activated chloride channel (CaCC) activation activity. Primarily expressed in the digestive tract, mainly in colon. Detected in smaller amounts in brain, urogenital organs, testis, and salivary and mammary glands. Highly expressed in the epithelial layer and submucosal gland of the inferior turbinate mucosa. Lower levels in the epithelial layer of nasal polyp.

It is found in the cell membrane. It localises to the apical cell membrane. Its subcellular location is the secreted. Its function is as follows. May be involved in mediating calcium-activated chloride conductance. This chain is Calcium-activated chloride channel regulator 4 (CLCA4), found in Homo sapiens (Human).